Consider the following 177-residue polypeptide: ATP-dependent protease subunit HslV (177 aa).

T2 is a catalytic residue. G157, C160, and T163 together coordinate Na(+).

Belongs to the peptidase T1B family. HslV subfamily. In terms of assembly, a double ring-shaped homohexamer of HslV is capped on each side by a ring-shaped HslU homohexamer. The assembly of the HslU/HslV complex is dependent on binding of ATP.

The protein resides in the cytoplasm. It carries out the reaction ATP-dependent cleavage of peptide bonds with broad specificity.. Allosterically activated by HslU binding. In terms of biological role, protease subunit of a proteasome-like degradation complex believed to be a general protein degrading machinery. This Aeromonas hydrophila subsp. hydrophila (strain ATCC 7966 / DSM 30187 / BCRC 13018 / CCUG 14551 / JCM 1027 / KCTC 2358 / NCIMB 9240 / NCTC 8049) protein is ATP-dependent protease subunit HslV.